Here is a 244-residue protein sequence, read N- to C-terminus: 14-3-3 protein homolog 1 (244 aa).

The protein belongs to the 14-3-3 family.

This Echinococcus granulosus (Hydatid tapeworm) protein is 14-3-3 protein homolog 1.